The following is a 106-amino-acid chain: ATP-dependent Clp protease adapter protein ClpS (106 aa).

This sequence belongs to the ClpS family. In terms of assembly, binds to the N-terminal domain of the chaperone ClpA.

In terms of biological role, involved in the modulation of the specificity of the ClpAP-mediated ATP-dependent protein degradation. This Pseudoalteromonas atlantica (strain T6c / ATCC BAA-1087) protein is ATP-dependent Clp protease adapter protein ClpS.